Consider the following 97-residue polypeptide: Large ribosomal subunit protein bL28 (97 aa).

This sequence belongs to the bacterial ribosomal protein bL28 family.

This is Large ribosomal subunit protein bL28 from Rickettsia prowazekii (strain Madrid E).